The primary structure comprises 506 residues: Maturase K (506 aa).

Belongs to the intron maturase 2 family. MatK subfamily.

It is found in the plastid. The protein resides in the chloroplast. Usually encoded in the trnK tRNA gene intron. Probably assists in splicing its own and other chloroplast group II introns. This Lathyrus tingitanus (Tangier pea) protein is Maturase K.